Consider the following 305-residue polypeptide: Heterogeneous nuclear ribonucleoprotein A0 (305 aa).

Methionine 1 carries the N-acetylmethionine modification. Residues 7–86 (CKLFIGGLNV…VELKRAVSRE (80 aa)) form the RRM 1 domain. Serine 68 carries the post-translational modification Phosphoserine. Lysine 80 is covalently cross-linked (Glycyl lysine isopeptide (Lys-Gly) (interchain with G-Cter in SUMO2)). The residue at position 84 (serine 84) is a Phosphoserine; by MAPKAPK2. Glycyl lysine isopeptide (Lys-Gly) (interchain with G-Cter in SUMO2) cross-links involve residues lysine 96, lysine 98, lysine 99, and lysine 106. One can recognise an RRM 2 domain in the interval 98-175 (KKLFVGGLKG…HRVEVKKAVP (78 aa)). At lysine 133 the chain carries N6-acetyllysine. The residue at position 139 (arginine 139) is an Omega-N-methylarginine. Residues lysine 154, lysine 159, lysine 172, and lysine 176 each participate in a glycyl lysine isopeptide (Lys-Gly) (interchain with G-Cter in SUMO2) cross-link. Disordered stretches follow at residues 178-211 (DIHAGGGGARAARGGRGGGRGRGGGGGGGGRDQN) and 265-305 (QSSY…GGSF). Composition is skewed to gly residues over residues 181-211 (AGGGGARAARGGRGGGRGRGGGGGGGGRDQN) and 272-284 (KSGGGGGGGGSWG). Arginine 286 carries the post-translational modification Omega-N-methylarginine. Over residues 292-305 (YRGGYGGGYGGGSF) the composition is skewed to gly residues. Arginine 293 is modified (asymmetric dimethylarginine; alternate). The residue at position 293 (arginine 293) is a Dimethylated arginine; alternate. Omega-N-methylarginine; alternate is present on arginine 293.

Post-translationally, phosphorylated at Ser-84 by MAPKAPK2 in response to LPS treatment, promoting stabilization of GADD45A mRNA. In terms of processing, arg-293 is dimethylated, probably to asymmetric dimethylarginine.

It is found in the nucleus. Its function is as follows. mRNA-binding component of ribonucleosomes. Specifically binds AU-rich element (ARE)-containing mRNAs. Involved in post-transcriptional regulation of cytokines mRNAs. This Mus musculus (Mouse) protein is Heterogeneous nuclear ribonucleoprotein A0 (Hnrnpa0).